Here is a 389-residue protein sequence, read N- to C-terminus: MSEYLFTSESVSEGHPDKVADQVSDAILDAILAQDPKARVAAETLVNTGLCVLAGEITTTAQVDYIKVARETIKRIGYNSSELGFDANGCAVGVYYDQQSPDIAQGVNEGEGIDLNQGAGDQGLMFGYACDETPTLMPFAIYYSHRLMQRQSELRKDGRLPWLRPDAKAQLTVVYDSETGKVKRIDTVVLSTQHDPEIGYEELKNAVIEQIIKPVLPSELLTDETKYLINPTGRFVIGGPQGDCGLTGRKIIVDTYGGAAPHGGGAFSGKDPSKVDRSAAYACRYVAKNIVAAGLATQCQIQVSYAIGVAEPTSISIDTFGTGKISEEKLITLVREHFDLRPKGIVQMLDLLRPIYSKSAAYGHFGREEPEFTWERTDKAAALRAAAGL.

An ATP-binding site is contributed by histidine 15. Position 17 (aspartate 17) interacts with Mg(2+). Glutamate 43 contacts K(+). L-methionine contacts are provided by glutamate 56 and glutamine 99. The tract at residues 99–109 (QSPDIAQGVNE) is flexible loop. Residues 166–168 (DAK), 234–235 (RF), aspartate 243, 249–250 (RK), alanine 266, and lysine 270 each bind ATP. Aspartate 243 lines the L-methionine pocket. Residue lysine 274 coordinates L-methionine.

This sequence belongs to the AdoMet synthase family. As to quaternary structure, homotetramer; dimer of dimers. Mg(2+) is required as a cofactor. The cofactor is K(+).

It is found in the cytoplasm. The enzyme catalyses L-methionine + ATP + H2O = S-adenosyl-L-methionine + phosphate + diphosphate. The protein operates within amino-acid biosynthesis; S-adenosyl-L-methionine biosynthesis; S-adenosyl-L-methionine from L-methionine: step 1/1. In terms of biological role, catalyzes the formation of S-adenosylmethionine (AdoMet) from methionine and ATP. The overall synthetic reaction is composed of two sequential steps, AdoMet formation and the subsequent tripolyphosphate hydrolysis which occurs prior to release of AdoMet from the enzyme. The sequence is that of S-adenosylmethionine synthase from Neisseria meningitidis serogroup C (strain 053442).